The chain runs to 282 residues: Bis(5'-nucleosyl)-tetraphosphatase, symmetrical (282 aa).

Belongs to the Ap4A hydrolase family.

The enzyme catalyses P(1),P(4)-bis(5'-adenosyl) tetraphosphate + H2O = 2 ADP + 2 H(+). Hydrolyzes diadenosine 5',5'''-P1,P4-tetraphosphate to yield ADP. The sequence is that of Bis(5'-nucleosyl)-tetraphosphatase, symmetrical from Burkholderia pseudomallei (strain 668).